The chain runs to 480 residues: Aspartyl/glutamyl-tRNA(Asn/Gln) amidotransferase subunit B (480 aa).

It belongs to the GatB/GatE family. GatB subfamily. In terms of assembly, heterotrimer of A, B and C subunits.

It catalyses the reaction L-glutamyl-tRNA(Gln) + L-glutamine + ATP + H2O = L-glutaminyl-tRNA(Gln) + L-glutamate + ADP + phosphate + H(+). It carries out the reaction L-aspartyl-tRNA(Asn) + L-glutamine + ATP + H2O = L-asparaginyl-tRNA(Asn) + L-glutamate + ADP + phosphate + 2 H(+). Allows the formation of correctly charged Asn-tRNA(Asn) or Gln-tRNA(Gln) through the transamidation of misacylated Asp-tRNA(Asn) or Glu-tRNA(Gln) in organisms which lack either or both of asparaginyl-tRNA or glutaminyl-tRNA synthetases. The reaction takes place in the presence of glutamine and ATP through an activated phospho-Asp-tRNA(Asn) or phospho-Glu-tRNA(Gln). The sequence is that of Aspartyl/glutamyl-tRNA(Asn/Gln) amidotransferase subunit B from Streptococcus pneumoniae (strain ATCC 700669 / Spain 23F-1).